We begin with the raw amino-acid sequence, 98 residues long: Integration host factor subunit beta (98 aa).

Belongs to the bacterial histone-like protein family. In terms of assembly, heterodimer of an alpha and a beta chain.

Its function is as follows. This protein is one of the two subunits of integration host factor, a specific DNA-binding protein that functions in genetic recombination as well as in transcriptional and translational control. This chain is Integration host factor subunit beta, found in Pseudomonas fluorescens (strain Pf0-1).